We begin with the raw amino-acid sequence, 89 residues long: Large ribosomal subunit protein bL27 (89 aa).

A disordered region spans residues 1 to 21 (MAHKKAGGSSRNGRDSAGRRL).

The protein belongs to the bacterial ribosomal protein bL27 family.

The protein is Large ribosomal subunit protein bL27 of Novosphingobium aromaticivorans (strain ATCC 700278 / DSM 12444 / CCUG 56034 / CIP 105152 / NBRC 16084 / F199).